The following is a 192-amino-acid chain: GTP cyclohydrolase-2 (192 aa).

47–51 is a GTP binding site; the sequence is RIHSE. 3 residues coordinate Zn(2+): Cys-52, Cys-63, and Cys-65. Residues Gln-68, 90–92, and Thr-112 contribute to the GTP site; that span reads EGR. Residue Asp-124 is the Proton acceptor of the active site. The Nucleophile role is filled by Arg-126. Positions 147 and 152 each coordinate GTP.

The protein belongs to the GTP cyclohydrolase II family. It depends on Zn(2+) as a cofactor.

The catalysed reaction is GTP + 4 H2O = 2,5-diamino-6-hydroxy-4-(5-phosphoribosylamino)-pyrimidine + formate + 2 phosphate + 3 H(+). The protein operates within cofactor biosynthesis; riboflavin biosynthesis; 5-amino-6-(D-ribitylamino)uracil from GTP: step 1/4. Its function is as follows. Catalyzes the conversion of GTP to 2,5-diamino-6-ribosylamino-4(3H)-pyrimidinone 5'-phosphate (DARP), formate and pyrophosphate. This chain is GTP cyclohydrolase-2, found in Picrophilus torridus (strain ATCC 700027 / DSM 9790 / JCM 10055 / NBRC 100828 / KAW 2/3).